The chain runs to 51 residues: Large ribosomal subunit protein bL33 (51 aa).

The interval 1–21 is disordered; the sequence is MRDKIKLESSAGTGHFYTTTK. Polar residues predominate over residues 10 to 20; it reads SAGTGHFYTTT.

Belongs to the bacterial ribosomal protein bL33 family.

The polypeptide is Large ribosomal subunit protein bL33 (rpmG) (Neisseria meningitidis serogroup A / serotype 4A (strain DSM 15465 / Z2491)).